Reading from the N-terminus, the 168-residue chain is Cell division inhibitor SulA (168 aa).

Positions 1–20 are disordered; that stretch reads MSTQSVSSHNIESSSFSANQ. A ftsZ binding region spans residues 105–111; that stretch reads ALLTGNY. Residues 161 to 168 form a lon protease binding region; it reads KIHSTLYH.

This sequence belongs to the SulA family. In terms of assembly, interacts with FtsZ. Is rapidly cleaved and degraded by the Lon protease once DNA damage is repaired.

Functionally, component of the SOS system and an inhibitor of cell division. Accumulation of SulA causes rapid cessation of cell division and the appearance of long, non-septate filaments. In the presence of GTP, binds a polymerization-competent form of FtsZ in a 1:1 ratio, thus inhibiting FtsZ polymerization and therefore preventing it from participating in the assembly of the Z ring. This mechanism prevents the premature segregation of damaged DNA to daughter cells during cell division. The protein is Cell division inhibitor SulA of Pectobacterium atrosepticum (strain SCRI 1043 / ATCC BAA-672) (Erwinia carotovora subsp. atroseptica).